Here is a 737-residue protein sequence, read N- to C-terminus: Phosphoribosylformylglycinamidine synthase subunit PurL (737 aa).

H48 is an active-site residue. Positions 51 and 90 each coordinate ATP. Mg(2+) is bound at residue E92. Substrate is bound by residues S93 to H96 and R115. H94 (proton acceptor) is an active-site residue. D116 lines the Mg(2+) pocket. Residue Q244 coordinates substrate. D272 is a Mg(2+) binding site. Position 316 to 318 (E316 to Q318) interacts with substrate. 2 residues coordinate ATP: D500 and G537. N538 serves as a coordination point for Mg(2+). S540 lines the substrate pocket.

Belongs to the FGAMS family. As to quaternary structure, monomer. Part of the FGAM synthase complex composed of 1 PurL, 1 PurQ and 2 PurS subunits.

The protein localises to the cytoplasm. The enzyme catalyses N(2)-formyl-N(1)-(5-phospho-beta-D-ribosyl)glycinamide + L-glutamine + ATP + H2O = 2-formamido-N(1)-(5-O-phospho-beta-D-ribosyl)acetamidine + L-glutamate + ADP + phosphate + H(+). It participates in purine metabolism; IMP biosynthesis via de novo pathway; 5-amino-1-(5-phospho-D-ribosyl)imidazole from N(2)-formyl-N(1)-(5-phospho-D-ribosyl)glycinamide: step 1/2. Part of the phosphoribosylformylglycinamidine synthase complex involved in the purines biosynthetic pathway. Catalyzes the ATP-dependent conversion of formylglycinamide ribonucleotide (FGAR) and glutamine to yield formylglycinamidine ribonucleotide (FGAM) and glutamate. The FGAM synthase complex is composed of three subunits. PurQ produces an ammonia molecule by converting glutamine to glutamate. PurL transfers the ammonia molecule to FGAR to form FGAM in an ATP-dependent manner. PurS interacts with PurQ and PurL and is thought to assist in the transfer of the ammonia molecule from PurQ to PurL. This is Phosphoribosylformylglycinamidine synthase subunit PurL from Sulfurimonas denitrificans (strain ATCC 33889 / DSM 1251) (Thiomicrospira denitrificans (strain ATCC 33889 / DSM 1251)).